We begin with the raw amino-acid sequence, 115 residues long: MIGIDIVSIARVERCVKRFKMKFLERFLSPSEILLCRDKSSTIAGFFALKEACSKALQVGIGKELSFLDMCISKSPKNAPLITLSKEKMNYFNIQSLSASISHDAGFAIAVVVVS.

Residues D5 and E51 each coordinate Mg(2+).

This sequence belongs to the P-Pant transferase superfamily. AcpS family. Mg(2+) is required as a cofactor.

The protein localises to the cytoplasm. The enzyme catalyses apo-[ACP] + CoA = holo-[ACP] + adenosine 3',5'-bisphosphate + H(+). Functionally, transfers the 4'-phosphopantetheine moiety from coenzyme A to a Ser of acyl-carrier-protein. This is Holo-[acyl-carrier-protein] synthase from Helicobacter acinonychis (strain Sheeba).